The chain runs to 1124 residues: MADGPRCKRRKQANPRRNNVTNYNTVVETNSDSDDEDKLHIVEEESVTDAADCEGVPEDDLPTDQTVLPGRSSEREGNAKNCWEDDRKEGQEILGPEAQADEAGCTVKDDECESDAENEQNHDPNVEEFLQQQDTAVIFPEAPEEDQRQGTPEASGHDENGTPDAFSQLLTCPYCDRGYKRFTSLKEHIKYRHEKNEDNFSCSLCSYTFAYRTQLERHMTSHKSGRDQRHVTQSGCNRKFKCTECGKAFKYKHHLKEHLRIHSGEKPYECPNCKKRFSHSGSYSSHISSKKCISLIPVNGRPRTGLKTSQCSSPSLSASPGSPTRPQIRQKIENKPLQEQLSVNQIKTEPVDYEFKPIVVASGINCSTPLQNGVFTGGGPLQATSSPQGMVQAVVLPTVGLVSPISINLSDIQNVLKVAVDGNVIRQVLENNQANLASKEQETINASPIQQGGHSVISAISLPLVDQDGTTKIIINYSLEQPSQLQVVPQNLKKENPVATNSCKSEKLPEDLTVKSEKDKSFEGGVNDSTCLLCDDCPGDINALPELKHYDLKQPTQPPPLPAAEAEKPESSVSSATGDGNLSPSQPPLKNLLSLLKAYYALNAQPSAEELSKIADSVNLPLDVVKKWFEKMQAGQISVQSSEPSSPEPGKVNIPAKNNDQPQSANANEPQDSTVNLQSPLKMTNSPVLPVGSTTNGSRSSTPSPSPLNLSSSRNTQGYLYTAEGAQEEPQVEPLDLSLPKQQGELLERSTITSVYQNSVYSVQEEPLNLSCAKKEPQKDSCVTDSEPVVNVIPPSANPINIAIPTVTAQLPTIVAIADQNSVPCLRALAANKQTILIPQVAYTYSTTVSPAVQEPPLKVIQPNGNQDERQDTSSEGVSNVEDQNDSDSTPPKKKMRKTENGMYACDLCDKIFQKSSSLLRHKYEHTGKRPHECGICKKAFKHKHHLIEHMRLHSGEKPYQCDKCGKRFSHSGSYSQHMNHRYSYCKREAEERDSTEQEEAGPEILSNEHVGARASPSQGDSDERESLTREEDEDSEKEEEEEDKEMEELQEEKECEKPQGDEEEEEEEEEVEEEEVEEAENEGEEAKTEGLMKDDRAESQASSLGQKVGESSEQVSEEKTNEA.

2 disordered regions span residues methionine 1–proline 124 and alanine 142–proline 163. Low complexity predominate over residues asparagine 18 to asparagine 30. 2 positions are modified to phosphoserine: serine 31 and serine 33. Residues glutamate 44–proline 62 show a composition bias toward acidic residues. Basic and acidic residues predominate over residues serine 72–glutamine 91. The C2H2-type 1 zinc finger occupies leucine 170–histidine 193. Glycyl lysine isopeptide (Lys-Gly) (interchain with G-Cter in SUMO2) cross-links involve residues lysine 186 and lysine 195. 2 consecutive C2H2-type zinc fingers follow at residues phenylalanine 200–histidine 222 and phenylalanine 240–histidine 262. The C2H2-type 4; atypical zinc finger occupies tyrosine 268 to cysteine 292. The disordered stretch occupies residues threonine 304 to glutamine 327. Residue lysine 307 forms a Glycyl lysine isopeptide (Lys-Gly) (interchain with G-Cter in SUMO2) linkage. The span at serine 309 to serine 322 shows a compositional bias: low complexity. Residues serine 313 and serine 322 each carry the phosphoserine modification. Residues lysine 331 and lysine 335 each participate in a glycyl lysine isopeptide (Lys-Gly) (interchain with G-Cter in SUMO2) cross-link. Residue lysine 347 forms a Glycyl lysine isopeptide (Lys-Gly) (interchain with G-Cter in SUMO); alternate linkage. Residue lysine 347 forms a Glycyl lysine isopeptide (Lys-Gly) (interchain with G-Cter in SUMO2); alternate linkage. Glycyl lysine isopeptide (Lys-Gly) (interchain with G-Cter in SUMO2) cross-links involve residues lysine 439, lysine 493, lysine 504, lysine 515, lysine 548, and lysine 553. Disordered regions lie at residues aspartate 551 to glutamine 586 and glutamine 636 to arginine 714. Positions asparagine 581–glutamine 640 form a DNA-binding region, homeobox; atypical. 5 positions are modified to phosphoserine: serine 642, serine 679, serine 686, serine 693, and serine 700. The span at alanine 656 to proline 687 shows a compositional bias: polar residues. The segment covering glycine 692–arginine 714 has biased composition (low complexity). Threonine 702 is subject to Phosphothreonine. Serine 704 bears the Phosphoserine mark. Residue lysine 774 forms a Glycyl lysine isopeptide (Lys-Gly) (interchain with G-Cter in SUMO); alternate linkage. Residue lysine 774 forms a Glycyl lysine isopeptide (Lys-Gly) (interchain with G-Cter in SUMO2); alternate linkage. Residues proline 856–lysine 898 form a disordered region. The span at serine 874–threonine 890 shows a compositional bias: polar residues. C2H2-type zinc fingers lie at residues tyrosine 904 to histidine 926 and histidine 932 to histidine 954. A C2H2-type 7; atypical zinc finger spans residues tyrosine 960–histidine 981. The disordered stretch occupies residues glutamate 989 to alanine 1124. Composition is skewed to acidic residues over residues glutamate 1031–glutamate 1052 and aspartate 1062–glycine 1084. Over residues glutamate 1085–glutamate 1099 the composition is skewed to basic and acidic residues. Over residues serine 1100–glutamine 1115 the composition is skewed to polar residues.

The protein belongs to the delta-EF1/ZFH-1 C2H2-type zinc-finger family. In terms of assembly, interacts (via N-terminus) with SMARCA4/BRG1. Post-translationally, ubiquitinated, leading to degradation in a proteasome-dependent manner. Deubiquitinated by USP51, leading to stabilization. As to expression, colocalizes with SMARCA4/BRG1 in E-cadherin-negative cells from established lines, and stroma of normal colon as well as in de-differentiated epithelial cells at the invasion front of colorectal carcinomas (at protein level). Expressed in heart and skeletal muscle, but not in liver, spleen, or pancreas.

The protein localises to the nucleus. In terms of biological role, acts as a transcriptional repressor. Inhibits interleukin-2 (IL-2) gene expression. Enhances or represses the promoter activity of the ATP1A1 gene depending on the quantity of cDNA and on the cell type. Represses E-cadherin promoter and induces an epithelial-mesenchymal transition (EMT) by recruiting SMARCA4/BRG1. Represses BCL6 transcription in the presence of the corepressor CTBP1. Positively regulates neuronal differentiation. Represses RCOR1 transcription activation during neurogenesis. Represses transcription by binding to the E box (5'-CANNTG-3'). In the absence of TGFB1, acts as a repressor of COL1A2 transcription via binding to the E-box in the upstream enhancer region. The chain is Zinc finger E-box-binding homeobox 1 from Homo sapiens (Human).